We begin with the raw amino-acid sequence, 137 residues long: Ig heavy chain V region MOPC 315 (137 aa).

The signal sequence occupies residues 1–18 (MKVLSLLYLLTAIPGIMS). The segment at 19–48 (DVQLQESGPGLVKPSQSLSLTCSVTGYSIT) is framework-1. A disulfide bridge connects residues Cys-40 and Cys-114. A complementarity-determining-1 region spans residues 49–54 (SGYFWN). The segment at 55–68 (WIRQFPGNKLEWLG) is framework-2. The tract at residues 69–84 (FIKYDGSNGYNPSLKN) is complementarity-determining-2. Positions 85–116 (RVSITRDTSENQFFLKLNSVTTEDTATYYCAG) are framework-3. The interval 117 to 126 (DNDHLYYFDY) is complementarity-determining-3. The segment at 127-137 (WGQGTTLTVSS) is framework-4.

The chain is Ig heavy chain V region MOPC 315 from Mus musculus (Mouse).